The sequence spans 430 residues: Arrestin-related trafficking adapter 10 (430 aa).

Positions 55 to 75 are disordered; the sequence is AEADRHSSRLPQDPQTQYTKE. A compositionally biased stretch (polar residues) spans 63 to 72; the sequence is RLPQDPQTQY.

It belongs to the ART10 family.

The protein localises to the cytoplasm. In terms of biological role, may regulate endocytosis by recruiting RSP5 ubiquitin ligase activity to specific plasma membrane proteins in response to extracellular stimuli. The protein is Arrestin-related trafficking adapter 10 (ART10) of Eremothecium gossypii (strain ATCC 10895 / CBS 109.51 / FGSC 9923 / NRRL Y-1056) (Yeast).